The chain runs to 249 residues: Protein-lysine 6-oxidase (249 aa).

Tyr-19 bears the Sulfotyrosine mark. Residues 45–249 are lysyl-oxidase like; the sequence is PDLVPDPYYI…YASGCTISPY (205 aa). 5 disulfide bridges follow: Cys-70–Cys-76, Cys-123–Cys-172, Cys-156–Cys-162, Cys-183–Cys-193, and Cys-230–Cys-244. Cu cation contacts are provided by His-124, His-126, and His-128. Residues 152–187 constitute a cross-link (lysine tyrosylquinone (Lys-Tyr)); that stretch reads KASFCLEDTSCDYGYHRRFACTAHTQGLSPGCYDTY. Tyr-187 carries the 2',4',5'-topaquinone modification.

The protein belongs to the lysyl oxidase family. As to quaternary structure, interacts with MFAP4. Interacts (via propeptide) with EFEMP2; this interaction is strong and facilitates formation of ternary complexes with ELN during elastic fiber assembly; this interaction limits interaction of EFEMP2 with FBLN5. Cu cation is required as a cofactor. Requires lysine tyrosylquinone residue as cofactor. In terms of processing, the lysine tyrosylquinone cross-link (LTQ) is generated by condensation of the epsilon-amino group of a lysine with a topaquinone produced by oxidation of tyrosine. Proteolytically cleaved by BMP1 which removes the propeptide. Also proteolytically cleaved by ADAMTS2 and ADAMTS14, but not by ADAMTS3, at an additional cleavage site downstream of the BMP1 cleavage site. The propeptide plays a role in directing the deposition of this enzyme to elastic fibers, via interaction with tropoelastin. Cleavage by BMP1 to remove the propeptide does not increase enzymatic activity but increases binding to collagen. Cleavage by ADAMTS2 produces a form with reduced collagen-binding activity. Post-translationally, sulfated at Tyr-19 and also at either Tyr-15 or Tyr-16 which enhances binding to collagen.

It is found in the secreted. It localises to the extracellular space. It catalyses the reaction L-lysyl-[protein] + O2 + H2O = (S)-2-amino-6-oxohexanoyl-[protein] + H2O2 + NH4(+). Functionally, responsible for the post-translational oxidative deamination of peptidyl lysine residues in precursors to fibrous collagen and elastin. Regulator of Ras expression. May play a role in tumor suppression. Plays a role in the aortic wall architecture. The protein is Protein-lysine 6-oxidase of Sus scrofa (Pig).